Here is a 277-residue protein sequence, read N- to C-terminus: MEKLYALFGCPVHHSLSPIMHNDAFQNMNIAAHYHAFHVEPERLKDAIAGVRALGISGVNVTIPHKTAVMPLLDEVDPTARRIGAVNTIVNRNGRLIGYNTDGPGYVRALEEEINVDIKEKRILLIGAGGAARGIYVSLADRGAKQIDICNRTVSKAKQLIDECNASVSSVVYSLNEAEERLGEYDILINTTSVGMYPNMEEMPLSLANMKEETIVSDIIYNPLETKWLKEARKRNGIIQNGVGMFVYQGALAFEKWTGIFPDVQRMKKIVIEQLRG.

Residues 15-17 (SLS) and Thr-62 contribute to the shikimate site. Catalysis depends on Lys-66, which acts as the Proton acceptor. Residues Asn-87 and Asp-102 each coordinate shikimate. NADP(+)-binding positions include 127–131 (GAGGA), 151–156 (NRTVSK), and Ile-219. Position 221 (Tyr-221) interacts with shikimate. NADP(+) is bound at residue Gly-242.

This sequence belongs to the shikimate dehydrogenase family. In terms of assembly, homodimer.

It catalyses the reaction shikimate + NADP(+) = 3-dehydroshikimate + NADPH + H(+). It functions in the pathway metabolic intermediate biosynthesis; chorismate biosynthesis; chorismate from D-erythrose 4-phosphate and phosphoenolpyruvate: step 4/7. Its function is as follows. Involved in the biosynthesis of the chorismate, which leads to the biosynthesis of aromatic amino acids. Catalyzes the reversible NADPH linked reduction of 3-dehydroshikimate (DHSA) to yield shikimate (SA). In Geobacillus sp. (strain WCH70), this protein is Shikimate dehydrogenase (NADP(+)).